Here is a 184-residue protein sequence, read N- to C-terminus: Major urinary protein 3 (184 aa).

Positions 1-22 (MKLLLPLLLLLCLELTLVCIHA) are cleaved as a signal peptide. N-linked (GlcNAc...) asparagine glycosylation occurs at asparagine 66. Cysteines 86 and 179 form a disulfide.

It belongs to the calycin superfamily. Lipocalin family. Glycosylated. In terms of tissue distribution, abundant in the urine of adult male mice but absent from that of females.

It is found in the secreted. In terms of biological role, binds pheromones that are released from drying urine of males. These pheromones affect the sexual behavior of females. The protein is Major urinary protein 3 (Mup3) of Mus musculus (Mouse).